A 439-amino-acid chain; its full sequence is Microfibrillar-associated protein 1A (439 aa).

The disordered stretch occupies residues 1-200 (MSVPSALMKQ…SEDEMEPRLK (200 aa)). N-acetylserine is present on Ser2. Over residues 23 to 34 (RNEKGEISMEKV) the composition is skewed to basic and acidic residues. Phosphoserine is present on residues Ser52 and Ser53. Over residues 61-70 (QFIKKAKEQE) the composition is skewed to basic and acidic residues. Lys67 participates in a covalent cross-link: Glycyl lysine isopeptide (Lys-Gly) (interchain with G-Cter in SUMO2). Residues 71–81 (AEPEEQEEDSS) show a composition bias toward acidic residues. 5 positions are modified to phosphoserine: Ser94, Ser116, Ser118, Ser132, and Ser133. Acidic residues-rich tracts occupy residues 112-122 (VVGESDSEVEG) and 131-144 (DSSE…DDEE). Residues 145–163 (IERRRGMMRQRAQERKNEE) show a composition bias toward basic and acidic residues. Positions 178–195 (ESESESEYEEYTDSEDEM) are enriched in acidic residues. Lys249 is covalently cross-linked (Glycyl lysine isopeptide (Lys-Gly) (interchain with G-Cter in SUMO2)). Residue Thr267 is modified to Phosphothreonine. Lys357 participates in a covalent cross-link: Glycyl lysine isopeptide (Lys-Gly) (interchain with G-Cter in SUMO2). Ser361 is modified (phosphoserine). Glycyl lysine isopeptide (Lys-Gly) (interchain with G-Cter in SUMO2) cross-links involve residues Lys371, Lys381, Lys415, and Lys418. Phosphoserine is present on Ser432.

The protein belongs to the MFAP1 family. Component of the spliceosome B complex. Interacts with PRPF38A (via N-terminal interaction domain).

It localises to the nucleus. Involved in pre-mRNA splicing as a component of the spliceosome. The sequence is that of Microfibrillar-associated protein 1A from Mus musculus (Mouse).